The primary structure comprises 373 residues: Leucine-, isoleucine-, valine-, threonine-, and alanine-binding protein (373 aa).

The signal sequence occupies residues 1–26 (MKKGTQRLSRLFAAMAIAGFASYSMA). Cys80 and Cys105 are oxidised to a cystine.

This sequence belongs to the leucine-binding protein family.

It is found in the periplasm. Component of the high-affinity leucine, isoleucine, valine transport system I (LIV-I), which is operative without Na(+) and is specific for alanine and threonine, in addition to branched-chain amino acids. Binds L-leucine, L-isoleucine, L-valine, L-threonine and L-alanine with nanomolar affinities. Can also bind L-homoserine with high affinity. The chain is Leucine-, isoleucine-, valine-, threonine-, and alanine-binding protein (braC) from Pseudomonas aeruginosa (strain ATCC 15692 / DSM 22644 / CIP 104116 / JCM 14847 / LMG 12228 / 1C / PRS 101 / PAO1).